We begin with the raw amino-acid sequence, 381 residues long: MTQAAPVTFSTVRENYFGPPAEMQALRHKAPVTRTAFADGRPGWLVTGYSAARAVLSDSRFTARGEREHPAVPRAATLEDERCRRLIAGQFTARRMRQLTGRTERIVREHLDAMEHMGSPADLVEHFALPVPSLVIAELLGVPPPDREHFQHDTLRWGGFGRSTEEVTEAFVSLGGQLQRLVRLKRTEPGDDLLSGLIAADPALTDEELASIAFLLLVAGHGTTAHQIALGAFLLLEHPDQLAALRADPALTESAVEELLRHLSVVHHGPTRAALQDADIEGTPVKAGEVVVVSLGAANRDPARFERPDAVDVTREDTGHLAFGHGMHQCLGRQLARIELRVALTALLERFPHLRLACPAAEIPLRHDMQVYGADRLPVAW.

Cysteine 330 is a binding site for heme.

Belongs to the cytochrome P450 family. Heme serves as cofactor.

Its subcellular location is the cytoplasm. The polypeptide is Cytochrome P450 105C1 (cyp105C1) (Streptomyces sp).